A 239-amino-acid chain; its full sequence is MEIFPAIDLKEGRCVRLYQGEFSKETVMNEDPVAQAIIFEKFGAKRLHIVDLDGAVAGESLNLSVIERICKAVRIPVQVGGGIRSLVAVEKLFSVGVDKVILGTAALYDKTFLEEAVLLYKEKIIVGIDAKNGFVATRGWLDVSEISYIDLAKQMEKIGVQTIVFTDISKDGTLAGPNIEQLELLQKSVAIRLIASGGVASIQDVKKLNDMNIYGVIIGKALYEKTIDLEEVLEVTKLC.

Aspartate 8 acts as the Proton acceptor in catalysis. Aspartate 129 serves as the catalytic Proton donor.

It belongs to the HisA/HisF family.

It is found in the cytoplasm. The enzyme catalyses 1-(5-phospho-beta-D-ribosyl)-5-[(5-phospho-beta-D-ribosylamino)methylideneamino]imidazole-4-carboxamide = 5-[(5-phospho-1-deoxy-D-ribulos-1-ylimino)methylamino]-1-(5-phospho-beta-D-ribosyl)imidazole-4-carboxamide. Its pathway is amino-acid biosynthesis; L-histidine biosynthesis; L-histidine from 5-phospho-alpha-D-ribose 1-diphosphate: step 4/9. This chain is 1-(5-phosphoribosyl)-5-[(5-phosphoribosylamino)methylideneamino] imidazole-4-carboxamide isomerase, found in Bacillus thuringiensis subsp. konkukian (strain 97-27).